The sequence spans 117 residues: Large ribosomal subunit protein uL18 (117 aa).

Belongs to the universal ribosomal protein uL18 family. In terms of assembly, part of the 50S ribosomal subunit; part of the 5S rRNA/L5/L18/L25 subcomplex. Contacts the 5S and 23S rRNAs.

In terms of biological role, this is one of the proteins that bind and probably mediate the attachment of the 5S RNA into the large ribosomal subunit, where it forms part of the central protuberance. The protein is Large ribosomal subunit protein uL18 of Onion yellows phytoplasma (strain OY-M).